The chain runs to 1046 residues: UDP-N-acetylglucosamine--peptide N-acetylglucosaminyltransferase 110 kDa subunit (1046 aa).

Alanine 2 is modified (N-acetylalanine). Residues serine 3 and serine 4 each carry the phosphoserine; by GSK3-beta; alternate modification. O-linked (GlcNAc) serine; alternate glycosylation is found at serine 3 and serine 4. Serine 20 carries the phosphoserine modification. 12 TPR repeats span residues 21-54, 89-122, 123-156, 157-190, 191-224, 225-258, 259-292, 293-326, 327-360, 361-394, 395-428, and 429-462; these read FQGLAELAHREYQAGDFEAAERHCMQLWRQEPDN, AEAYSNLGNVYKERGQLQEAIEHYRHALRLKPDF, IDGYINLAAALVAAGDMEGAVQAYVSALQYNPDL, YCVRSDLGNLLKALGRLEEAKACYLKAIETQPNF, AVAWSNLGCVFNAQGEIWLAIHHFEKAVTLDPNF, LDAYINLGNVLKEARIFDRAVAAYLRALSLSPNH, AVVHGNLACVYYEQGLIDLAIDTYRRAIELQPHF, PDAYCNLANALKEKGSVAEAEDCYNTALRLCPTH, ADSLNNLANIKREQGNIEEAVRLYRKALEVFPEF, AAAHSNLASVLQQQGKLQEALMHYKEAIRISPTF, ADAYSNMGNTLKEMQDVQGALQCYTRAIQINPAF, and ADAHSNLASIHKDSGNIPEAIASYRTALKLKPDF. Residue serine 399 is glycosylated (O-linked (GlcNAc) serine; by autocatalysis). Threonine 454 bears the Phosphothreonine mark. One copy of the TPR 13; truncated repeat lies at 463–473; sequence PDAYCNLAHCL. The DFP motif signature appears at 464-466; it reads DAY. The short motif at 487-503 is the Nuclear localization signal element; the sequence is KKLVSIVAEQLEKNRLP. Catalysis depends on histidine 508, which acts as the Proton acceptor. UDP is bound by residues glutamine 849, lysine 852, 906–908, 911–914, 930–932, and aspartate 935; these read APK, HVRR, and HTT. The residue at position 989 (tyrosine 989) is a Phosphotyrosine. Residues 991–1010 form a required for phosphatidylinositol 3,4,5-triphosphate binding region; it reads KKIRGKVWKQRISSPLFNTK.

This sequence belongs to the glycosyltransferase 41 family. O-GlcNAc transferase subfamily. As to quaternary structure, monomer; may exist in different oligomerization states in cells. Homotrimer, oligomerizes via TPR repeats 6 and 7. Trimerization is not necessary for activity in vitro, however it increases affinity for UDP-GlcNAc. Component of a THAP1/THAP3-HCFC1-OGT complex. Component of the NSL complex at least composed of MOF/KAT8, KANSL1, KANSL2, KANSL3, MCRS1, PHF20, OGT1/OGT, WDR5 and HCFC1. Found in a complex with KIF5B, RHOT1, RHOT2 and TRAK1. Found in a complex composed of at least SINHCAF, SIN3A, HDAC1, SAP30, RBBP4, OGT and TET1. Component of a complex composed of KMT2E/MLL5, OGT and USP7; the complex stabilizes KMT2E/MLL5, preventing KMT2E/MLL5 ubiquitination and proteasomal-mediated degradation. Interacts (via TPRs 1-6) with SIN3A; the interaction mediates transcriptional repression in parallel with histone deacetylase. Interacts (via TPR 5-6) with TET1, TET2 and TET3. Interacts (via TPR repeats 6 and 7) with ATXN10. Interacts with NSD2. Interacts with PROSER1; this interaction mediates TET2 O-GlcNAcylation and stability by promoting the interaction between OGT and TET2. Post-translationally, ubiquitinated by the SCF(FBXO31) complex, leading to its proteasomal degradation. Phosphorylation on Ser-3 or Ser-4 by GSK3-beta positively regulates its activity. Phosphorylation at Thr-454 by AMPK promotes nuclear localization. In terms of processing, glycosylated via autocatalysis; O-GlcNAcylation at Ser-399 promotes nuclear localization.

It is found in the cytoplasm. It localises to the nucleus. The protein resides in the cell membrane. The protein localises to the mitochondrion membrane. Its subcellular location is the cell projection. The catalysed reaction is L-seryl-[protein] + UDP-N-acetyl-alpha-D-glucosamine = 3-O-(N-acetyl-beta-D-glucosaminyl)-L-seryl-[protein] + UDP + H(+). It catalyses the reaction L-threonyl-[protein] + UDP-N-acetyl-alpha-D-glucosamine = 3-O-(N-acetyl-beta-D-glucosaminyl)-L-threonyl-[protein] + UDP + H(+). Its pathway is protein modification; protein glycosylation. Subject to product inhibition by UDP. In terms of biological role, catalyzes the transfer of a single N-acetylglucosamine from UDP-GlcNAc to a serine or threonine residue in cytoplasmic and nuclear proteins resulting in their modification with a beta-linked N-acetylglucosamine (O-GlcNAc). Glycosylates a large and diverse number of proteins including histone H2B, AKT1, AMPK, ATG4B, CAPRIN1, EZH2, FNIP1, GSDMD, KRT7, LMNA, LMNB1, LMNB2, RPTOR, HOXA1, PFKL, KMT2E/MLL5, MAPT/TAU, TET2, RBL2, RET, NOD2 and HCFC1. Can regulate their cellular processes via cross-talk between glycosylation and phosphorylation or by affecting proteolytic processing. Involved in insulin resistance in muscle and adipocyte cells via glycosylating insulin signaling components and inhibiting the 'Thr-308' phosphorylation of AKT1, enhancing IRS1 phosphorylation and attenuating insulin signaling. Involved in glycolysis regulation by mediating glycosylation of 6-phosphofructokinase PFKL, inhibiting its activity. Plays a key role in chromatin structure by mediating O-GlcNAcylation of 'Ser-112' of histone H2B: recruited to CpG-rich transcription start sites of active genes via its interaction with TET proteins (TET1, TET2 or TET3). As part of the NSL complex indirectly involved in acetylation of nucleosomal histone H4 on several lysine residues. O-GlcNAcylation of 'Ser-75' of EZH2 increases its stability, and facilitating the formation of H3K27me3 by the PRC2/EED-EZH2 complex. Stabilizes KMT2E/MLL5 by mediating its glycosylation, thereby preventing KMT2E/MLL5 ubiquitination. Regulates circadian oscillation of the clock genes and glucose homeostasis in the liver. Stabilizes clock proteins BMAL1 and CLOCK through O-glycosylation, which prevents their ubiquitination and subsequent degradation. Promotes the CLOCK-BMAL1-mediated transcription of genes in the negative loop of the circadian clock such as PER1/2 and CRY1/2. O-glycosylates HCFC1 and regulates its proteolytic processing and transcriptional activity. Component of a THAP1/THAP3-HCFC1-OGT complex that is required for the regulation of the transcriptional activity of RRM1. Regulates mitochondrial motility in neurons by mediating glycosylation of TRAK1. Promotes autophagy by mediating O-glycosylation of ATG4B. Acts as a regulator of mTORC1 signaling by mediating O-glycosylation of RPTOR and FNIP1: O-GlcNAcylation of RPTOR in response to glucose sufficiency promotes activation of the mTORC1 complex. The protein is UDP-N-acetylglucosamine--peptide N-acetylglucosaminyltransferase 110 kDa subunit (Ogt) of Mus musculus (Mouse).